The primary structure comprises 88 residues: Large ribosomal subunit protein bL31B (88 aa).

Belongs to the bacterial ribosomal protein bL31 family. Type B subfamily. In terms of assembly, part of the 50S ribosomal subunit.

This chain is Large ribosomal subunit protein bL31B, found in Corynebacterium diphtheriae (strain ATCC 700971 / NCTC 13129 / Biotype gravis).